The primary structure comprises 848 residues: Leucine--tRNA ligase (848 aa).

Residues 1-21 (MTENTPGTSAPERFDPATADT) are disordered. The 'HIGH' region signature appears at 51 to 61 (PYPSGRIHIGH). The short motif at 625-629 (KMSKS) is the 'KMSKS' region element. Lysine 628 contributes to the ATP binding site.

It belongs to the class-I aminoacyl-tRNA synthetase family.

The protein localises to the cytoplasm. The enzyme catalyses tRNA(Leu) + L-leucine + ATP = L-leucyl-tRNA(Leu) + AMP + diphosphate. This Novosphingobium aromaticivorans (strain ATCC 700278 / DSM 12444 / CCUG 56034 / CIP 105152 / NBRC 16084 / F199) protein is Leucine--tRNA ligase.